A 104-amino-acid polypeptide reads, in one-letter code: Enhancer of rudimentary homolog 1 (104 aa).

This sequence belongs to the E(R) family. In terms of assembly, homodimer. Component of the erh1-mmi1 complex. Interacts with mmi1 (via N-terminus) in a 2:2 stoichiometry.

It localises to the nucleus. The protein resides in the cytoplasm. In terms of biological role, forms part of the erh1-mmi1 complex that recruits the CCR4-NOT complex and the NURS complex to target RNAs. Suppresses the meiotic program during vegetative growth and promotes the meiotic program during mating. Recruitment of the NURS complex to target mRNAs promotes mRNA decay by engagement of the nuclear exosome, and formation of heterochromatin islands at meiotic genes silenced by the exosome. Recruitment of the CCR4-NOT complex to target RNAs promotes heterochromatin formation at RNAi-dependent heterochromatin domains (HOODs), including a subset of meiotic genes, lncRNAs and retrotransposons. Recruitment of the CCR4-NOT complex to rDNA promotes rDNA heterochromatin assembly. The protein is Enhancer of rudimentary homolog 1 of Schizosaccharomyces pombe (strain 972 / ATCC 24843) (Fission yeast).